A 634-amino-acid chain; its full sequence is Chaperone protein HtpG (634 aa).

Residues 1–342 (MSVETQKETL…SNDLSLNVSR (342 aa)) form an a; substrate-binding region. The interval 343–559 (EILQKDPIID…EQDLGLQMRQ (217 aa)) is b. Residues 560–634 (ILEASGQKVP…LNKLLVELSV (75 aa)) are c.

Belongs to the heat shock protein 90 family. As to quaternary structure, homodimer.

It localises to the cytoplasm. Its function is as follows. Molecular chaperone. Has ATPase activity. The sequence is that of Chaperone protein HtpG from Pseudomonas fluorescens (strain ATCC BAA-477 / NRRL B-23932 / Pf-5).